The following is a 469-amino-acid chain: MNLIGPSHLQATDEFALSENLFGVLTEHAAGPLGQNLDLESYSPYNNVQFPQVQPQISSSSYYSNLGFYPQQPEDWYSPGLYELRRMPTESVYQGETEVSEMPVTKKPRMAASSAGRIKGDELCVVCGDRASGYHYNALTCEGCKGFFRRSITKNAVYKCKNGGNCVMDMYMRRKCQDCRLRKCREMGMLAECLLTEIQCKSKRLRKNVKQHADQTVNEDSEGRDLRQVTSTTKLCREKTELTVDQQTLLDYIMDSYSKQRMPQEITNKILKEEFSAEENFLILTEMATSHVQILVEFTKRLPGFQTLDHEDQIALLKGSAVEAMFLRSAEIFNKKLPAGHADLLEERIRKSGISDEYITPMFSFYKSVGELKMTQEEYALLTAIVILSPDRQYIKDREAVEKLQEPLLDVLQKLCKIYQPENPQHFACLLGRLTELRTFNHHHAEMLMSWRVNDHKFTPLLCEIWDVQ.

Lysine 119 is covalently cross-linked (Glycyl lysine isopeptide (Lys-Gly) (interchain with G-Cter in SUMO1)). Positions 121–196 (DELCVVCGDR…MGMLAECLLT (76 aa)) form a DNA-binding region, nuclear receptor. The NR C4-type zinc-finger motif lies at 124 to 144 (CVVCGDRASGYHYNALTCEGC). Serine 132 and serine 151 each carry phosphoserine; by PKC/PRKCA. The residue at position 154 (lysine 154) is an N6-acetyllysine; by EP300. The NR C4-type zinc finger occupies 160-184 (CKNGGNCVMDMYMRRKCQDCRLRKC). Lysine 203 bears the N6-methyllysine; by SETD7 mark. Residue lysine 210 is modified to N6-acetyllysine; by EP300. The 225-residue stretch at 245 to 469 (DQQTLLDYIM…PLLCEIWDVQ (225 aa)) folds into the NR LBD domain. A Glycyl lysine isopeptide (Lys-Gly) (interchain with G-Cter in SUMO1) cross-link involves residue lysine 272. Arginine 328 is a binding site for 3beta,7beta-dihydroxy-5beta-cholan-24-oate. Chenodeoxycholate-binding residues include arginine 328, tyrosine 358, and tyrosine 366. 3beta,7beta-dihydroxy-5beta-cholan-24-oate is bound at residue tyrosine 366. Threonine 439 bears the Phosphothreonine; by PKC/PRKCZ mark. Histidine 444 contributes to the chenodeoxycholate binding site.

Belongs to the nuclear hormone receptor family. NR1 subfamily. In terms of assembly, heterodimer with RXRA; the heterodimerization enhances the binding affinity for LXXLL motifs from coactivators. Binds DNA predominantly as a heterodimer with RXRA. After activation by agonist binding interacts with coactivators. Interacts with NCOA1, NCOA2, PPARGC1A, CARM1, SETD7, PRMT1, GPS2, SMARCA4 and MED1, EP300 and SMARCD1. Interacts with XRCC5 and XRCC6; decreasing NR1H4/FXR transactivation activity towards ABCB11/BSEP. Interacts with PAGR1 AND NCOA6; indicative for an association with an MLL2/MLL3 complex (ASCOM). Acetylated by EP300. Lys-210 as is the major acetylation site for EP300; the dynamicly regulated acetylation inhibits heterodimerization with RXRA and transactivation activity. Deacetylated by SIRT1. In terms of processing, methylation may increase transactivation of target genes. Post-translationally, phosphorylation by PKC/PRKCA increases transactivation activity by promoting association with PPARGC1A. Sumoylated upon ligand binding.

The protein localises to the nucleus. Ligand-activated transcription factor. Receptor for bile acids (BAs) such as chenodeoxycholic acid (CDCA), lithocholic acid, deoxycholic acid (DCA) and allocholic acid (ACA). Plays a essential role in BA homeostasis through the regulation of genes involved in BA synthesis, conjugation and enterohepatic circulation. Also regulates lipid and glucose homeostasis and is involved innate immune response. The FXR-RXR heterodimer binds predominantly to farnesoid X receptor response elements (FXREs) containing two inverted repeats of the consensus sequence 5'-AGGTCA-3' in which the monomers are spaced by 1 nucleotide (IR-1) but also to tandem repeat DR1 sites with lower affinity, and can be activated by either FXR or RXR-specific ligands. It is proposed that monomeric nuclear receptors such as NR5A2/LRH-1 bound to coregulatory nuclear responsive element (NRE) halfsites located in close proximity to FXREs modulate transcriptional activity. In the liver activates transcription of the corepressor NR0B2 thereby indirectly inhibiting CYP7A1 and CYP8B1 (involved in BA synthesis) implicating at least in part histone demethylase KDM1A resulting in epigenomic repression, and SLC10A1/NTCP (involved in hepatic uptake of conjugated BAs). Activates transcription of the repressor MAFG (involved in regulation of BA synthesis). Activates transcription of SLC27A5/BACS and BAAT (involved in BA conjugation), ABCB11/BSEP (involved in bile salt export) by directly recruiting histone methyltransferase CARM1, and ABCC2/MRP2 (involved in secretion of conjugated BAs) and ABCB4 (involved in secretion of phosphatidylcholine in the small intestine). Activates transcription of SLC27A5/BACS and BAAT (involved in BA conjugation), ABCB11/BSEP (involved in bile salt export) by directly recruiting histone methyltransferase CARM1, and ABCC2/MRP2 (involved in secretion of conjugated BAs) and ABCB4 (involved in secretion of phosphatidylcholine in the small intestine). In the intestine activates FGF19 expression and secretion leading to hepatic CYP7A1 repression. The function also involves the coordinated induction of hepatic KLB/beta-klotho expression. Regulates transcription of liver UGT2B4 and SULT2A1 involved in BA detoxification; binding to the UGT2B4 promoter seems to imply a monomeric transactivation independent of RXRA. Modulates lipid homeostasis by activating liver NR0B2/SHP-mediated repression of SREBF1 (involved in de novo lipogenesis), expression of PLTP (involved in HDL formation), SCARB1 (involved in HDL hepatic uptake), APOE, APOC1, APOC4, PPARA (involved in beta-oxidation of fatty acids), VLDLR and SDC1 (involved in the hepatic uptake of LDL and IDL remnants), and inhibiting expression of MTTP (involved in VLDL assembly). Increases expression of APOC2 (promoting lipoprotein lipase activity implicated in triglyceride clearance). Transrepresses APOA1 involving a monomeric competition with NR2A1 for binding to a DR1 element. Also reduces triglyceride clearance by inhibiting expression of ANGPTL3 and APOC3 (both involved in inhibition of lipoprotein lipase). Involved in glucose homeostasis by modulating hepatic gluconeogenesis through activation of NR0B2/SHP-mediated repression of respective genes. Modulates glycogen synthesis (inducing phosphorylation of glycogen synthase kinase-3). Modulates glucose-stimulated insulin secretion and is involved in insulin resistance. Involved in intestinal innate immunity. Plays a role in protecting the distal small intestine against bacterial overgrowth and preservation of the epithelial barrier. Down-regulates inflammatory cytokine expression in several types of immune cells including macrophages and mononuclear cells. Mediates trans-repression of TLR4-induced cytokine expression; the function seems to require its sumoylation and prevents N-CoR nuclear receptor corepressor clearance from target genes such as IL1B and NOS2. Involved in the TLR9-mediated protective mechanism in intestinal inflammation. Plays an anti-inflammatory role in liver inflammation; proposed to inhibit pro-inflammatory (but not antiapoptotic) NF-kappa-B signaling. This chain is Bile acid receptor (Nr1h4), found in Rattus norvegicus (Rat).